The sequence spans 156 residues: ATP synthase subunit b (156 aa).

Residues 12-32 (VAFFIFVLFCMKFVWPPVIAA) traverse the membrane as a helical segment.

This sequence belongs to the ATPase B chain family. F-type ATPases have 2 components, F(1) - the catalytic core - and F(0) - the membrane proton channel. F(1) has five subunits: alpha(3), beta(3), gamma(1), delta(1), epsilon(1). F(0) has three main subunits: a(1), b(2) and c(10-14). The alpha and beta chains form an alternating ring which encloses part of the gamma chain. F(1) is attached to F(0) by a central stalk formed by the gamma and epsilon chains, while a peripheral stalk is formed by the delta and b chains.

It localises to the cell inner membrane. F(1)F(0) ATP synthase produces ATP from ADP in the presence of a proton or sodium gradient. F-type ATPases consist of two structural domains, F(1) containing the extramembraneous catalytic core and F(0) containing the membrane proton channel, linked together by a central stalk and a peripheral stalk. During catalysis, ATP synthesis in the catalytic domain of F(1) is coupled via a rotary mechanism of the central stalk subunits to proton translocation. In terms of biological role, component of the F(0) channel, it forms part of the peripheral stalk, linking F(1) to F(0). The sequence is that of ATP synthase subunit b from Pseudomonas syringae pv. syringae (strain B728a).